Here is a 354-residue protein sequence, read N- to C-terminus: D-alanine--D-alanine ligase (354 aa).

The ATP-grasp domain occupies Lys-132–Gln-342. An ATP-binding site is contributed by Glu-168–Val-223. The Mg(2+) site is built by Asp-295, Glu-309, and Asn-311.

It belongs to the D-alanine--D-alanine ligase family. Requires Mg(2+) as cofactor. It depends on Mn(2+) as a cofactor.

It is found in the cytoplasm. It carries out the reaction 2 D-alanine + ATP = D-alanyl-D-alanine + ADP + phosphate + H(+). The protein operates within cell wall biogenesis; peptidoglycan biosynthesis. Functionally, cell wall formation. This is D-alanine--D-alanine ligase from Synechocystis sp. (strain ATCC 27184 / PCC 6803 / Kazusa).